The primary structure comprises 808 residues: Phenylalanine--tRNA ligase beta subunit (808 aa).

Positions asparagine 40–leucine 155 constitute a tRNA-binding domain. A B5 domain is found at isoleucine 409–threonine 484. 4 residues coordinate Mg(2+): aspartate 462, aspartate 468, glutamate 471, and glutamate 472. An FDX-ACB domain is found at proline 714 to arginine 807.

Belongs to the phenylalanyl-tRNA synthetase beta subunit family. Type 1 subfamily. Tetramer of two alpha and two beta subunits. Mg(2+) is required as a cofactor.

The protein resides in the cytoplasm. The catalysed reaction is tRNA(Phe) + L-phenylalanine + ATP = L-phenylalanyl-tRNA(Phe) + AMP + diphosphate + H(+). This Halalkalibacterium halodurans (strain ATCC BAA-125 / DSM 18197 / FERM 7344 / JCM 9153 / C-125) (Bacillus halodurans) protein is Phenylalanine--tRNA ligase beta subunit (pheT).